The primary structure comprises 510 residues: Maturase K (510 aa).

Belongs to the intron maturase 2 family. MatK subfamily.

It localises to the plastid. Its subcellular location is the chloroplast. Functionally, usually encoded in the trnK tRNA gene intron. Probably assists in splicing its own and other chloroplast group II introns. The protein is Maturase K of Populus nigra (Lombardy poplar).